We begin with the raw amino-acid sequence, 2256 residues long: GON-4-like protein (2256 aa).

Disordered regions lie at residues 1 to 56 (MLPC…DSAG), 105 to 213 (PSLE…SLGP), and 227 to 266 (LFIP…MTYD). Positions 23 to 35 (EDLHLEAAVKPDT) are enriched in basic and acidic residues. Polar residues predominate over residues 40–53 (DCTSESLSWGQSHD). A compositionally biased stretch (basic and acidic residues) spans 141–176 (TREDGGDHTVPEEPPSGEHAEEVKAEGGELEMHSEG). Basic residues predominate over residues 242 to 254 (RKKTKKGTKRKRD). The residue at position 346 (Ser-346) is a Phosphoserine. The segment covering 366 to 395 (EDDDSSDEEYQPDEEEEDETAEESLLESDV) has biased composition (acidic residues). Disordered regions lie at residues 366–428 (EDDD…VLSE), 441–460 (SAEV…QTRD), and 545–573 (DVEN…DTED). Residues 545-571 (DVENEDEADDDDDPEYNFLEDLDEPDT) are compositionally biased toward acidic residues. The segment at 609–1363 (EMGFSNMEDD…DCMEEISSDF (755 aa)) is required for interaction with YY1, SIN3A and HDAC1, and transcriptional repression activity. The residue at position 783 (Ser-783) is a Phosphoserine. 2 stretches are compositionally biased toward low complexity: residues 947 to 959 (TAGG…TETS) and 1094 to 1115 (PWSE…LPSL). 4 disordered regions span residues 947 to 969 (TAGG…KTSP), 1078 to 1141 (AALP…SPCV), 1241 to 1288 (AEGK…EAVS), and 1360 to 1620 (SSDF…SRAR). Residues 1119–1135 (KFRKPYVRRKPTRRKGA) show a composition bias toward basic residues. Residues 1364-1386 (PKQDIGEEVKEECCMELDRDSPQ) are compositionally biased toward basic and acidic residues. Polar residues-rich tracts occupy residues 1387–1401 (EKAS…QTAT) and 1429–1444 (LPQS…TVLN). Position 1445 is a phosphoserine (Ser-1445). The segment covering 1475 to 1495 (GAEEEEEEDFDDLTQDEEDEL) has biased composition (acidic residues). The segment covering 1496 to 1510 (SSASEESVLSVPELQ) has biased composition (low complexity). Residues 1529–1553 (GESEEENSQEENSEPEEEEEEEAEG) are compositionally biased toward acidic residues. The segment covering 1606-1620 (RSSHRARSRRGSRAR) has biased composition (basic residues). 2 consecutive PAH domains span residues 1644-1716 (EQKD…LLPE) and 1726-1797 (EQQA…FDHL). Disordered regions lie at residues 1831-1886 (VEEE…LKKS) and 1909-1966 (LELV…APIP). A compositionally biased stretch (basic and acidic residues) spans 1851–1868 (EIGVQHQDKESEWPEAAK). A phosphoserine mark is found at Ser-1921 and Ser-1994. 2 disordered regions span residues 2050–2078 (PETS…STRD) and 2110–2148 (IRGT…VLPK). Residues 2111-2129 (RGTSSGASASEAAPTASRE) show a composition bias toward low complexity. A Myb-like domain is found at 2163-2216 (STGEKVVLWTREADRVILTMCQEQGAQPHTFSVISQQLGNKTPVEVSHRFRELM). Positions 2223-2256 (CEASSEDEDDATSTSNADQLSDHGDLLSEEELDE) are disordered.

As to quaternary structure, found in a complex with YY1, SIN3A and HDAC1.

It localises to the nucleus. In terms of biological role, has transcriptional repressor activity, probably as part of a complex with YY1, SIN3A and HDAC1. Required for B cell lymphopoiesis. The sequence is that of GON-4-like protein (Gon4l) from Rattus norvegicus (Rat).